The sequence spans 239 residues: Increased recombination centers protein 22-1 (239 aa).

A signal peptide spans 1–19 (MKLSTIFTAFAATIATVAG). Residues 20–161 (YETTGSKQTV…AAVSFFDPRL (142 aa)) are Lumenal-facing. A helical transmembrane segment spans residues 162-182 (IFLELVLLITFAGLIYVGYEI). Residues 183–239 (WGKQYFKGVASVKAKKVSAAKASSPVASGPSTTSATGYDTNWIPESHLKQKKTKKVN) are Cytoplasmic-facing. Low complexity predominate over residues 201–213 (AAKASSPVASGPS). Residues 201–222 (AAKASSPVASGPSTTSATGYDT) form a disordered region.

The protein belongs to the IRC22 family.

It localises to the endoplasmic reticulum membrane. Functionally, is probably involved in a pathway contributing to genomic integrity. The polypeptide is Increased recombination centers protein 22-1 (IRC22-1) (Candida albicans (strain WO-1) (Yeast)).